Consider the following 310-residue polypeptide: p-hydroxybenzoic acid efflux pump subunit AaeA (310 aa).

Residues 12–32 traverse the membrane as a helical segment; that stretch reads AITLVLVILAFIAIFRAWVYY.

This sequence belongs to the membrane fusion protein (MFP) (TC 8.A.1) family.

Its subcellular location is the cell inner membrane. Its function is as follows. Forms an efflux pump with AaeB. In Salmonella heidelberg (strain SL476), this protein is p-hydroxybenzoic acid efflux pump subunit AaeA.